A 602-amino-acid chain; its full sequence is Elongation factor 4 (602 aa).

The region spanning 8 to 189 (KNIRNFSIIA…KIITTIPAPS (182 aa)) is the tr-type G domain. Residues 20–25 (DHGKST) and 136–139 (NKID) each bind GTP.

The protein belongs to the TRAFAC class translation factor GTPase superfamily. Classic translation factor GTPase family. LepA subfamily.

The protein resides in the cell inner membrane. The catalysed reaction is GTP + H2O = GDP + phosphate + H(+). Functionally, required for accurate and efficient protein synthesis under certain stress conditions. May act as a fidelity factor of the translation reaction, by catalyzing a one-codon backward translocation of tRNAs on improperly translocated ribosomes. Back-translocation proceeds from a post-translocation (POST) complex to a pre-translocation (PRE) complex, thus giving elongation factor G a second chance to translocate the tRNAs correctly. Binds to ribosomes in a GTP-dependent manner. The polypeptide is Elongation factor 4 (Helicobacter pylori (strain ATCC 700392 / 26695) (Campylobacter pylori)).